A 205-amino-acid polypeptide reads, in one-letter code: MAHGPGALMLKCVVVGDGAVGKTCLLMSYANDAFPEEYVPTVFDHYAVSVTVGGKQYLLGLYDTAGQEDYDRLRPLSYPMTDVFLICFSVVNPASFQNVKEEWVPELKEYAPNVPFLLIGTQIDLRDDPKTLARLNDMKEKPVCVEQGQKLAKEIGACCYVECSALTQKGLKTVFDEAIIAILTPKKHTVKKRIGSRCINCCLIT.

GTP is bound at residue 16–23 (GDGAVGKT). The short motif at 38 to 46 (YVPTVFDHY) is the Effector region element. GTP is bound by residues 63 to 67 (DTAGQ) and 121 to 124 (TQID). Cys-202 bears the Cysteine methyl ester mark. Residue Cys-202 is the site of S-farnesyl cysteine attachment. The propeptide at 203–205 (LIT) is removed in mature form.

This sequence belongs to the small GTPase superfamily. Rho family. As to quaternary structure, interacts with EXO70, CDC42EP1, CDC42EP2 and CDC42EP3 in a GTP-dependent manner. Interacts with CDC42EP4, PARD6A, PARD6G (and probably PARD6B) in a GTP-dependent manner. Part of a quaternary complex containing PARD3, some PARD6 protein (PARD6A, PARD6B or PARD6G) and some atypical PKC protein (PRKCI or PRKCZ). Interacts with GOPC. Interacts with ARHGAP33/TCGAP. In terms of processing, may be post-translationally modified by both palmitoylation and polyisoprenylation.

It is found in the cytoplasm. The protein localises to the cell membrane. Its activity is regulated as follows. Regulated by guanine nucleotide exchange factors (GEFs) which promote the exchange of bound GDP for free GTP, GTPase activating proteins (GAPs) which increase the GTP hydrolysis activity, and GDP dissociation inhibitors which inhibit the dissociation of the nucleotide from the GTPase. In terms of biological role, plasma membrane-associated small GTPase which cycles between an active GTP-bound and an inactive GDP-bound state. In active state binds to a variety of effector proteins to regulate cellular responses. Involved in epithelial cell polarization processes. May play a role in CFTR trafficking to the plasma membrane. Causes the formation of thin, actin-rich surface projections called filopodia. This Mus musculus (Mouse) protein is Rho-related GTP-binding protein RhoQ (Rhoq).